The sequence spans 507 residues: ATP synthase subunit alpha, chloroplastic (507 aa).

G170–T177 lines the ATP pocket.

The protein belongs to the ATPase alpha/beta chains family. In terms of assembly, F-type ATPases have 2 components, CF(1) - the catalytic core - and CF(0) - the membrane proton channel. CF(1) has five subunits: alpha(3), beta(3), gamma(1), delta(1), epsilon(1). CF(0) has four main subunits: a, b, b' and c.

The protein localises to the plastid. It localises to the chloroplast thylakoid membrane. The enzyme catalyses ATP + H2O + 4 H(+)(in) = ADP + phosphate + 5 H(+)(out). Produces ATP from ADP in the presence of a proton gradient across the membrane. The alpha chain is a regulatory subunit. The chain is ATP synthase subunit alpha, chloroplastic from Ceratophyllum demersum (Rigid hornwort).